Reading from the N-terminus, the 151-residue chain is Transcriptional repressor NrdR (151 aa).

A zinc finger spans residues 3–34; it reads CPYCGYEETRVLDSRVDSSGMTVRRRRECVKC. The ATP-cone domain occupies 49–139; that stretch reads VFVVKKDGKR…VYKDFREIDQ (91 aa).

This sequence belongs to the NrdR family. Zn(2+) serves as cofactor.

In terms of biological role, negatively regulates transcription of bacterial ribonucleotide reductase nrd genes and operons by binding to NrdR-boxes. The chain is Transcriptional repressor NrdR from Thermosipho melanesiensis (strain DSM 12029 / CIP 104789 / BI429).